The sequence spans 366 residues: Alanine racemase (366 aa).

Lysine 40 functions as the Proton acceptor; specific for D-alanine in the catalytic mechanism. Residue lysine 40 is modified to N6-(pyridoxal phosphate)lysine. Substrate is bound at residue arginine 136. Tyrosine 263 acts as the Proton acceptor; specific for L-alanine in catalysis. Methionine 310 contributes to the substrate binding site.

It belongs to the alanine racemase family. The cofactor is pyridoxal 5'-phosphate.

The enzyme catalyses L-alanine = D-alanine. It functions in the pathway amino-acid biosynthesis; D-alanine biosynthesis; D-alanine from L-alanine: step 1/1. Functionally, catalyzes the interconversion of L-alanine and D-alanine. May also act on other amino acids. The protein is Alanine racemase (alr) of Streptococcus equi subsp. zooepidemicus (strain H70).